Reading from the N-terminus, the 200-residue chain is FMN-dependent NADH:quinone oxidoreductase 2 (200 aa).

135–138 serves as a coordination point for FMN; that stretch reads SRGG.

This sequence belongs to the azoreductase type 1 family. As to quaternary structure, homodimer. FMN serves as cofactor.

It carries out the reaction 2 a quinone + NADH + H(+) = 2 a 1,4-benzosemiquinone + NAD(+). The enzyme catalyses N,N-dimethyl-1,4-phenylenediamine + anthranilate + 2 NAD(+) = 2-(4-dimethylaminophenyl)diazenylbenzoate + 2 NADH + 2 H(+). In terms of biological role, quinone reductase that provides resistance to thiol-specific stress caused by electrophilic quinones. Functionally, also exhibits azoreductase activity. Catalyzes the reductive cleavage of the azo bond in aromatic azo compounds to the corresponding amines. The sequence is that of FMN-dependent NADH:quinone oxidoreductase 2 from Clostridium acetobutylicum (strain ATCC 824 / DSM 792 / JCM 1419 / IAM 19013 / LMG 5710 / NBRC 13948 / NRRL B-527 / VKM B-1787 / 2291 / W).